A 447-amino-acid chain; its full sequence is Glutamyl-tRNA(Gln) amidotransferase subunit A (447 aa).

Catalysis depends on charge relay system residues Lys50 and Ser125. Residue Ser149 is the Acyl-ester intermediate of the active site.

It belongs to the amidase family. GatA subfamily. In terms of assembly, heterotrimer of A, B and C subunits.

It catalyses the reaction L-glutamyl-tRNA(Gln) + L-glutamine + ATP + H2O = L-glutaminyl-tRNA(Gln) + L-glutamate + ADP + phosphate + H(+). Functionally, allows the formation of correctly charged Gln-tRNA(Gln) through the transamidation of misacylated Glu-tRNA(Gln) in organisms which lack glutaminyl-tRNA synthetase. The reaction takes place in the presence of glutamine and ATP through an activated gamma-phospho-Glu-tRNA(Gln). The sequence is that of Glutamyl-tRNA(Gln) amidotransferase subunit A from Sulfurimonas denitrificans (strain ATCC 33889 / DSM 1251) (Thiomicrospira denitrificans (strain ATCC 33889 / DSM 1251)).